Reading from the N-terminus, the 129-residue chain is Small ribosomal subunit protein uS11 (129 aa).

The protein belongs to the universal ribosomal protein uS11 family. Part of the 30S ribosomal subunit. Interacts with proteins S7 and S18. Binds to IF-3.

Located on the platform of the 30S subunit, it bridges several disparate RNA helices of the 16S rRNA. Forms part of the Shine-Dalgarno cleft in the 70S ribosome. This is Small ribosomal subunit protein uS11 from Phenylobacterium zucineum (strain HLK1).